The primary structure comprises 114 residues: Iron-sulfur cluster assembly protein CyaY (114 aa).

The protein belongs to the frataxin family.

Its function is as follows. Involved in iron-sulfur (Fe-S) cluster assembly. May act as a regulator of Fe-S biogenesis. The sequence is that of Iron-sulfur cluster assembly protein CyaY from Ralstonia pickettii (strain 12J).